Here is a 75-residue protein sequence, read N- to C-terminus: UPF0352 protein YejL (75 aa).

Belongs to the UPF0352 family.

The chain is UPF0352 protein YejL from Shigella dysenteriae serotype 1 (strain Sd197).